An 84-amino-acid chain; its full sequence is Small ribosomal subunit protein uS17 (84 aa).

Belongs to the universal ribosomal protein uS17 family. In terms of assembly, part of the 30S ribosomal subunit.

Functionally, one of the primary rRNA binding proteins, it binds specifically to the 5'-end of 16S ribosomal RNA. This chain is Small ribosomal subunit protein uS17, found in Aliivibrio fischeri (strain ATCC 700601 / ES114) (Vibrio fischeri).